Reading from the N-terminus, the 275-residue chain is Formamidopyrimidine-DNA glycosylase (275 aa).

Catalysis depends on proline 2, which acts as the Schiff-base intermediate with DNA. Residue glutamate 3 is the Proton donor of the active site. The Proton donor; for beta-elimination activity role is filled by lysine 58. DNA is bound by residues histidine 92, arginine 111, and arginine 154. The segment at 239–273 adopts an FPG-type zinc-finger fold; that stretch reads HVYHRQGLPCQRCGTPIERIKVAQRGTHFCPHCQV. The Proton donor; for delta-elimination activity role is filled by arginine 263.

It belongs to the FPG family. In terms of assembly, monomer. Zn(2+) is required as a cofactor.

It catalyses the reaction Hydrolysis of DNA containing ring-opened 7-methylguanine residues, releasing 2,6-diamino-4-hydroxy-5-(N-methyl)formamidopyrimidine.. The enzyme catalyses 2'-deoxyribonucleotide-(2'-deoxyribose 5'-phosphate)-2'-deoxyribonucleotide-DNA = a 3'-end 2'-deoxyribonucleotide-(2,3-dehydro-2,3-deoxyribose 5'-phosphate)-DNA + a 5'-end 5'-phospho-2'-deoxyribonucleoside-DNA + H(+). In terms of biological role, involved in base excision repair of DNA damaged by oxidation or by mutagenic agents. Acts as a DNA glycosylase that recognizes and removes damaged bases. Has a preference for oxidized purines, such as 7,8-dihydro-8-oxoguanine (8-oxoG). Has AP (apurinic/apyrimidinic) lyase activity and introduces nicks in the DNA strand. Cleaves the DNA backbone by beta-delta elimination to generate a single-strand break at the site of the removed base with both 3'- and 5'-phosphates. The protein is Formamidopyrimidine-DNA glycosylase of Pediococcus pentosaceus (strain ATCC 25745 / CCUG 21536 / LMG 10740 / 183-1w).